Consider the following 86-residue polypeptide: ATP synthase subunit c (86 aa).

2 helical membrane passes run alanine 4–alanine 24 and valine 57–valine 77.

This sequence belongs to the ATPase C chain family. In terms of assembly, F-type ATPases have 2 components, F(1) - the catalytic core - and F(0) - the membrane proton channel. F(1) has five subunits: alpha(3), beta(3), gamma(1), delta(1), epsilon(1). F(0) has three main subunits: a(1), b(2) and c(10-14). The alpha and beta chains form an alternating ring which encloses part of the gamma chain. F(1) is attached to F(0) by a central stalk formed by the gamma and epsilon chains, while a peripheral stalk is formed by the delta and b chains.

It is found in the cell membrane. Its function is as follows. F(1)F(0) ATP synthase produces ATP from ADP in the presence of a proton or sodium gradient. F-type ATPases consist of two structural domains, F(1) containing the extramembraneous catalytic core and F(0) containing the membrane proton channel, linked together by a central stalk and a peripheral stalk. During catalysis, ATP synthesis in the catalytic domain of F(1) is coupled via a rotary mechanism of the central stalk subunits to proton translocation. Functionally, key component of the F(0) channel; it plays a direct role in translocation across the membrane. A homomeric c-ring of between 10-14 subunits forms the central stalk rotor element with the F(1) delta and epsilon subunits. In Clostridioides difficile (strain 630) (Peptoclostridium difficile), this protein is ATP synthase subunit c.